Here is a 211-residue protein sequence, read N- to C-terminus: tRNA (guanine-N(7)-)-methyltransferase (211 aa).

The S-adenosyl-L-methionine site is built by E44, D69, D96, and D118. D118 is an active-site residue. K122 is a binding site for substrate. An interaction with RNA region spans residues 124 to 129 (RHEKRR). Substrate contacts are provided by residues D154 and 191–194 (TEYE).

This sequence belongs to the class I-like SAM-binding methyltransferase superfamily. TrmB family.

The enzyme catalyses guanosine(46) in tRNA + S-adenosyl-L-methionine = N(7)-methylguanosine(46) in tRNA + S-adenosyl-L-homocysteine. Its pathway is tRNA modification; N(7)-methylguanine-tRNA biosynthesis. Functionally, catalyzes the formation of N(7)-methylguanine at position 46 (m7G46) in tRNA. The protein is tRNA (guanine-N(7)-)-methyltransferase of Streptococcus equi subsp. zooepidemicus (strain H70).